Consider the following 181-residue polypeptide: LEM domain-containing protein 1 (181 aa).

Residues 1-45 (MVDVKCLSDCKLQNQLEKLGFSPGPILPSTRKLYEKKLVQLLVSP) form the LEM domain. A helical; Signal-anchor for type II membrane protein membrane pass occupies residues 152 to 172 (FPVGLKLAVLGIFIIVVFVYL).

As to expression, testis-specific. Isoform 6 is detected in 17 of 18 colon cancer tissues examined.

It localises to the membrane. The chain is LEM domain-containing protein 1 (LEMD1) from Homo sapiens (Human).